The chain runs to 471 residues: UDP-N-acetylmuramate--L-alanine ligase (471 aa).

114-120 (GTHGKTT) is a binding site for ATP.

Belongs to the MurCDEF family.

Its subcellular location is the cytoplasm. The enzyme catalyses UDP-N-acetyl-alpha-D-muramate + L-alanine + ATP = UDP-N-acetyl-alpha-D-muramoyl-L-alanine + ADP + phosphate + H(+). It functions in the pathway cell wall biogenesis; peptidoglycan biosynthesis. In terms of biological role, cell wall formation. The protein is UDP-N-acetylmuramate--L-alanine ligase of Brucella abortus (strain S19).